The sequence spans 1306 residues: Receptor-type tyrosine-protein phosphatase C (1306 aa).

The signal sequence occupies residues 1-25 (MTMYLWLKLLAFGFAFLDTEVFVTG). At 26 to 577 (QSPTPSPTGL…LHHSTSYNSK (552 aa)) the chain is on the extracellular side. The tract at residues 28–163 (PTPSPTGLTT…TASTFPTDPV (136 aa)) is disordered. Polar residues-rich tracts occupy residues 52 to 61 (THTTAFSPAS) and 70 to 131 (SETT…SGSA). Residues Asn-80, Asn-92, Asn-97, Asn-186, Asn-192, Asn-199, Asn-234, Asn-262, Asn-272, and Asn-278 are each glycosylated (N-linked (GlcNAc...) asparagine). The N-linked (GlcNAc...) asparagine; atypical glycan is linked to Asn-286. 6 N-linked (GlcNAc...) asparagine glycosylation sites follow: Asn-337, Asn-380, Asn-421, Asn-470, Asn-490, and Asn-531. 2 consecutive Fibronectin type-III domains span residues 391 to 483 (SPGE…TKSA) and 484 to 576 (PPSQ…SYNS). The chain crosses the membrane as a helical span at residues 578–598 (ALIAFLAFLIIVTSIALLVVL). Residues 599 to 1306 (YKIYDLHKKR…PASPALNQGS (708 aa)) are Cytoplasmic-facing. 2 consecutive Tyrosine-protein phosphatase domains span residues 653 to 912 (FLAE…LVEY) and 944 to 1228 (LEAE…IAST). Tyr-683 carries the post-translational modification Phosphotyrosine. Substrate is bound by residues Asp-821, 853–859 (CSAGVGR), and Gln-897. Residue Cys-853 is the Phosphocysteine intermediate of the active site. Phosphoserine is present on residues Ser-975, Ser-994, Ser-997, Ser-1001, Ser-1004, Ser-1005, and Ser-1009. Positions 993–1014 (MSKESEHDSDESSDDDSDSEEP) are disordered. Residues 999-1012 (HDSDESSDDDSDSE) show a composition bias toward acidic residues. Cys-1169 acts as the Phosphocysteine intermediate in catalysis. Positions 1261-1306 (CVNPLGAPEKLPEAKEQAEGSEPTSGTEGPEHSVNGPASPALNQGS) are disordered. Position 1299 is a phosphoserine (Ser-1299).

Belongs to the protein-tyrosine phosphatase family. Receptor class 1/6 subfamily. In terms of assembly, binds GANAB and PRKCSH. Interacts with SKAP1. Interacts with DPP4; the interaction is enhanced in an interleukin-12-dependent manner in activated lymphocytes. Interacts with CD53; this interaction stabilizes PTPRC on the membrane and is required for optimal phosphatase activity. As to quaternary structure, interacts with CLEC10A. Does not interact with CLEC10A. In terms of assembly, (Microbial infection) Interacts with human cytomegalovirus protein UL11; the interaction is required for binding of UL11 to T-cells. In terms of processing, heavily N- and O-glycosylated. As to expression, isoform 1: Detected in thymocytes. Isoform 2: Detected in thymocytes. Isoform 3: Detected in thymocytes. Isoform 4: Not detected in thymocytes. Isoform 5: Detected in thymocytes. Isoform 6: Not detected in thymocytes. Isoform 7: Detected in thymocytes. Isoform 8: Not detected in thymocytes.

It localises to the cell membrane. Its subcellular location is the membrane raft. The protein resides in the synapse. It carries out the reaction O-phospho-L-tyrosyl-[protein] + H2O = L-tyrosyl-[protein] + phosphate. Its function is as follows. Protein tyrosine-protein phosphatase required for T-cell activation through the antigen receptor. Acts as a positive regulator of T-cell coactivation upon binding to DPP4. The first PTPase domain has enzymatic activity, while the second one seems to affect the substrate specificity of the first one. Upon T-cell activation, recruits and dephosphorylates SKAP1 and FYN. Dephosphorylates LYN, and thereby modulates LYN activity. Interacts with CLEC10A at antigen presenting cell-T cell contact; CLEC10A on immature dendritic cells recognizes Tn antigen-carrying PTPRC/CD45 receptor on effector T cells and modulates T cell activation threshold to limit autoreactivity. In terms of biological role, (Microbial infection) Acts as a receptor for human cytomegalovirus protein UL11 and mediates binding of UL11 to T-cells, leading to reduced induction of tyrosine phosphorylation of multiple signaling proteins upon T-cell receptor stimulation and impaired T-cell proliferation. The chain is Receptor-type tyrosine-protein phosphatase C from Homo sapiens (Human).